The following is a 571-amino-acid chain: Isocitrate dehydrogenase kinase/phosphatase (571 aa).

Residues 318-324 (APGVRGM) and K339 contribute to the ATP site. D374 is a catalytic residue.

Belongs to the AceK family.

The protein localises to the cytoplasm. The enzyme catalyses L-seryl-[isocitrate dehydrogenase] + ATP = O-phospho-L-seryl-[isocitrate dehydrogenase] + ADP + H(+). Bifunctional enzyme which can phosphorylate or dephosphorylate isocitrate dehydrogenase (IDH) on a specific serine residue. This is a regulatory mechanism which enables bacteria to bypass the Krebs cycle via the glyoxylate shunt in response to the source of carbon. When bacteria are grown on glucose, IDH is fully active and unphosphorylated, but when grown on acetate or ethanol, the activity of IDH declines drastically concomitant with its phosphorylation. This chain is Isocitrate dehydrogenase kinase/phosphatase, found in Pseudomonas putida (strain ATCC 700007 / DSM 6899 / JCM 31910 / BCRC 17059 / LMG 24140 / F1).